The following is a 930-amino-acid chain: Translation initiation factor IF-2 (930 aa).

A disordered region spans residues 51–325; it reads PGAGKSAAKP…TREIGGVKVP (275 aa). 2 stretches are compositionally biased toward low complexity: residues 56 to 111 and 121 to 162; these read SAAK…KPGV and TPAA…GNNP. Residues 263-295 are compositionally biased toward gly residues; it reads RPGGGPGGGPGRPGGPGGRGGRGNAQGAFGRGG. A compositionally biased stretch (basic residues) spans 296 to 307; sequence GPRKGRKSKRAK. Basic and acidic residues predominate over residues 308-320; it reads RQEFEQQHTREIG. A tr-type G domain is found at 422–596; it reads PRPAVVTVMG…LTADAALELT (175 aa). Residues 431-438 are G1; it reads GHVDHGKT. 431–438 provides a ligand contact to GTP; sequence GHVDHGKT. The G2 stretch occupies residues 456–460; sequence GITQH. The segment at 481 to 484 is G3; it reads DTPG. GTP-binding positions include 481–485 and 535–538; these read DTPGH and NKID. A G4 region spans residues 535–538; sequence NKID. The G5 stretch occupies residues 571-573; it reads SAR.

The protein belongs to the TRAFAC class translation factor GTPase superfamily. Classic translation factor GTPase family. IF-2 subfamily.

The protein localises to the cytoplasm. Its function is as follows. One of the essential components for the initiation of protein synthesis. Protects formylmethionyl-tRNA from spontaneous hydrolysis and promotes its binding to the 30S ribosomal subunits. Also involved in the hydrolysis of GTP during the formation of the 70S ribosomal complex. The chain is Translation initiation factor IF-2 from Micrococcus luteus (strain ATCC 4698 / DSM 20030 / JCM 1464 / CCM 169 / CCUG 5858 / IAM 1056 / NBRC 3333 / NCIMB 9278 / NCTC 2665 / VKM Ac-2230) (Micrococcus lysodeikticus).